We begin with the raw amino-acid sequence, 291 residues long: Bifunctional protein FolD (291 aa).

NADP(+)-binding positions include 168–170 (GRG), T195, and V236.

This sequence belongs to the tetrahydrofolate dehydrogenase/cyclohydrolase family. Homodimer.

The catalysed reaction is (6R)-5,10-methylene-5,6,7,8-tetrahydrofolate + NADP(+) = (6R)-5,10-methenyltetrahydrofolate + NADPH. It catalyses the reaction (6R)-5,10-methenyltetrahydrofolate + H2O = (6R)-10-formyltetrahydrofolate + H(+). It functions in the pathway one-carbon metabolism; tetrahydrofolate interconversion. In terms of biological role, catalyzes the oxidation of 5,10-methylenetetrahydrofolate to 5,10-methenyltetrahydrofolate and then the hydrolysis of 5,10-methenyltetrahydrofolate to 10-formyltetrahydrofolate. The polypeptide is Bifunctional protein FolD (Bifidobacterium adolescentis (strain ATCC 15703 / DSM 20083 / NCTC 11814 / E194a)).